An 84-amino-acid polypeptide reads, in one-letter code: Small ribosomal subunit protein eS27 (84 aa).

A C4-type zinc finger spans residues 38 to 60 (CPKCGATTTTFSHAHRQILCQKC).

The protein belongs to the eukaryotic ribosomal protein eS27 family. As to quaternary structure, component of the small ribosomal subunit. It depends on Zn(2+) as a cofactor.

Its subcellular location is the cytoplasm. Its function is as follows. Component of the small ribosomal subunit. The ribosome is a large ribonucleoprotein complex responsible for the synthesis of proteins in the cell. Required for proper rRNA processing and maturation of 18S rRNAs. The sequence is that of Small ribosomal subunit protein eS27 (RPS27) from Entamoeba histolytica (strain ATCC 30459 / HM-1:IMSS / ABRM).